The sequence spans 529 residues: DnaJ homolog l(2)tid, mitochondrial (529 aa).

A mitochondrion-targeting transit peptide spans 1–22 (MISCKNLCVLRQLPLKNCRRHY). The residue at position 35 (Arg-35) is an Omega-N-methylarginine. Residues 80 to 145 (DYYATLGVAK…QKRREYDTYG (66 aa)) enclose the J domain. Lys-121 is subject to N6-acetyllysine. A CR-type zinc finger spans residues 230-308 (GVNKDVNVNV…CEGKGQTVQR (79 aa)). Residues Cys-243, Cys-246, Cys-260, Cys-263, Cys-282, Cys-285, Cys-296, and Cys-299 each coordinate Zn(2+). Residues 243 to 250 (CPKCAGSK) form a CXXCXGXG motif; approximate repeat. Residues 260–267 (CQYCNGTG) form a CXXCXGXG motif repeat. One copy of the CXXCXGXG motif; approximate repeat lies at 282–289 (CRYCQGTR). The CXXCXGXG motif repeat unit spans residues 296–303 (CAECEGKG). A disordered region spans residues 441–529 (TPGQIHGMAQ…FLNKIKSMFN (89 aa)). Residues 497-508 (QSEKSETRRKDQ) show a composition bias toward basic and acidic residues.

The protein resides in the mitochondrion outer membrane. May act as a tumor suppressor in larval imaginal disks. In Drosophila virilis (Fruit fly), this protein is DnaJ homolog l(2)tid, mitochondrial (l(2)tid).